The sequence spans 198 residues: NAD(P)H dehydrogenase (quinone) (198 aa).

The Flavodoxin-like domain occupies 4–190 (ILVLYYSMYG…ILASFQGAHV (187 aa)). Residues 10-15 (SMYGHI) and 79-81 (TRF) contribute to the FMN site. NAD(+) is bound at residue tyrosine 12. Tryptophan 99 contributes to the substrate binding site. FMN-binding positions include 114 to 119 (STGTGG) and histidine 134.

This sequence belongs to the WrbA family. FMN is required as a cofactor.

The catalysed reaction is a quinone + NADH + H(+) = a quinol + NAD(+). It carries out the reaction a quinone + NADPH + H(+) = a quinol + NADP(+). The chain is NAD(P)H dehydrogenase (quinone) from Azotobacter vinelandii (strain DJ / ATCC BAA-1303).